Reading from the N-terminus, the 138-residue chain is Large ribosomal subunit protein uL16 (138 aa).

Residues 1 to 13 are compositionally biased toward basic residues; it reads MLQPKRRKYRKEQ. The tract at residues 1–20 is disordered; the sequence is MLQPKRRKYRKEQKGRNTGI.

This sequence belongs to the universal ribosomal protein uL16 family. Part of the 50S ribosomal subunit.

Its function is as follows. Binds 23S rRNA and is also seen to make contacts with the A and possibly P site tRNAs. The protein is Large ribosomal subunit protein uL16 of Ralstonia nicotianae (strain ATCC BAA-1114 / GMI1000) (Ralstonia solanacearum).